The following is a 614-amino-acid chain: uncharacterized protein (614 aa).

The segment at 23-68 (YPIPSHNGDGESEKNSSDSTSSKVNAKVTSSLQGAPSTNDENSVSP) is disordered. Residues 49 to 68 (KVTSSLQGAPSTNDENSVSP) are compositionally biased toward polar residues.

To C.trachomatis CT875.

This is an uncharacterized protein from Chlamydia muridarum (strain MoPn / Nigg).